Reading from the N-terminus, the 694-residue chain is Threonine--tRNA ligase (694 aa).

The region spanning 8-74 (NFVNTSVTTH…EETATFTAVP (67 aa)) is the TGS domain. Positions 273 to 579 (DHRRLGTELD…LLEHYAGAFP (307 aa)) are catalytic. Cys-378, His-429, and His-556 together coordinate Zn(2+).

It belongs to the class-II aminoacyl-tRNA synthetase family. Homodimer. The cofactor is Zn(2+).

Its subcellular location is the cytoplasm. The catalysed reaction is tRNA(Thr) + L-threonine + ATP = L-threonyl-tRNA(Thr) + AMP + diphosphate + H(+). Catalyzes the attachment of threonine to tRNA(Thr) in a two-step reaction: L-threonine is first activated by ATP to form Thr-AMP and then transferred to the acceptor end of tRNA(Thr). Also edits incorrectly charged L-seryl-tRNA(Thr). The sequence is that of Threonine--tRNA ligase from Corynebacterium efficiens (strain DSM 44549 / YS-314 / AJ 12310 / JCM 11189 / NBRC 100395).